Reading from the N-terminus, the 75-residue chain is MRSGIHPDYHEITVIMTDGTEYKTRSCYGEPGATLRLDVDPKSHPAWTGVQRMMDTGGQVAKFNKRFAGIGTRTK.

It belongs to the bacterial ribosomal protein bL31 family. Type A subfamily. In terms of assembly, part of the 50S ribosomal subunit.

Binds the 23S rRNA. The sequence is that of Large ribosomal subunit protein bL31 from Gluconobacter oxydans (strain 621H) (Gluconobacter suboxydans).